Consider the following 214-residue polypeptide: Thiamine import ATP-binding protein ThiQ (214 aa).

The ABC transporter domain occupies isoleucine 2–isoleucine 212. Glycine 31–serine 38 contacts ATP.

It belongs to the ABC transporter superfamily. Thiamine importer (TC 3.A.1.19.1) family. The complex is composed of two ATP-binding proteins (ThiQ), two transmembrane proteins (ThiP) and a solute-binding protein (ThiB).

It localises to the cell inner membrane. The catalysed reaction is thiamine(out) + ATP + H2O = thiamine(in) + ADP + phosphate + H(+). In terms of biological role, part of the ABC transporter complex ThiBPQ involved in thiamine import. Responsible for energy coupling to the transport system. This is Thiamine import ATP-binding protein ThiQ from Histophilus somni (strain 129Pt) (Haemophilus somnus).